A 34-amino-acid polypeptide reads, in one-letter code: Phospholipase A2 (34 aa).

Residue H18 is part of the active site. D19 contacts Ca(2+).

Belongs to the phospholipase A2 family. Group I subfamily. D49 sub-subfamily. Ca(2+) is required as a cofactor. In terms of processing, contains 7 disulfide bonds. Expressed by the venom gland.

It is found in the secreted. It carries out the reaction a 1,2-diacyl-sn-glycero-3-phosphocholine + H2O = a 1-acyl-sn-glycero-3-phosphocholine + a fatty acid + H(+). Functionally, snake venom phospholipase A2 (PLA2) that strongly inhibits platelet aggregation and has a strong anticoagulant activity. PLA2 catalyzes the calcium-dependent hydrolysis of the 2-acyl groups in 3-sn-phosphoglycerides. This is Phospholipase A2 from Pseudechis papuanus (Papuan black snake).